The primary structure comprises 459 residues: Cyclin-dependent kinase F-4 (459 aa).

Residues 4-283 (FKMIKEVGDG…AAEVLQHTFF (280 aa)) form the Protein kinase domain. Residues 10-18 (VGDGTFGSV) and K33 contribute to the ATP site. Catalysis depends on D125, which acts as the Proton acceptor. The residue at position 151 (S151) is a Phosphoserine. At T156 the chain carries Phosphothreonine. Residues 310–397 (KGVSEHGMPR…RHSRSLPETG (88 aa)) are disordered. 2 stretches are compositionally biased toward polar residues: residues 322 to 346 (STGT…SKTG) and 366 to 375 (ESNNKLTTNR).

The protein belongs to the protein kinase superfamily. CMGC Ser/Thr protein kinase family. CDC2/CDKX subfamily.

The catalysed reaction is L-seryl-[protein] + ATP = O-phospho-L-seryl-[protein] + ADP + H(+). It carries out the reaction L-threonyl-[protein] + ATP = O-phospho-L-threonyl-[protein] + ADP + H(+). The enzyme catalyses [DNA-directed RNA polymerase] + ATP = phospho-[DNA-directed RNA polymerase] + ADP + H(+). This Oryza sativa subsp. japonica (Rice) protein is Cyclin-dependent kinase F-4 (CDKF-4).